Consider the following 1188-residue polypeptide: DNA-directed RNA polymerase subunit beta (1188 aa).

This sequence belongs to the RNA polymerase beta chain family. As to quaternary structure, the RNAP catalytic core consists of 2 alpha, 1 beta, 1 beta' and 1 omega subunit. When a sigma factor is associated with the core the holoenzyme is formed, which can initiate transcription.

The catalysed reaction is RNA(n) + a ribonucleoside 5'-triphosphate = RNA(n+1) + diphosphate. Its function is as follows. DNA-dependent RNA polymerase catalyzes the transcription of DNA into RNA using the four ribonucleoside triphosphates as substrates. The sequence is that of DNA-directed RNA polymerase subunit beta from Streptococcus gordonii (strain Challis / ATCC 35105 / BCRC 15272 / CH1 / DL1 / V288).